Consider the following 729-residue polypeptide: Fatty acid oxidation complex subunit alpha (729 aa).

The segment at 1–189 is enoyl-CoA hydratase/isomerase; the sequence is MLYQSETLQL…KIGLVDAVVD (189 aa). Residue D296 participates in substrate binding. Residues 311-729 are 3-hydroxyacyl-CoA dehydrogenase; that stretch reads AAPKLAAVLG…LLDVSTNQPA (419 aa). NAD(+) contacts are provided by residues M324, D343, 400-402, K407, and S429; that span reads VVE. Catalysis depends on H450, which acts as the For 3-hydroxyacyl-CoA dehydrogenase activity. NAD(+) is bound at residue N453. 2 residues coordinate substrate: N500 and Y660.

The protein in the N-terminal section; belongs to the enoyl-CoA hydratase/isomerase family. It in the C-terminal section; belongs to the 3-hydroxyacyl-CoA dehydrogenase family. Heterotetramer of two alpha chains (FadB) and two beta chains (FadA).

The enzyme catalyses a (3S)-3-hydroxyacyl-CoA + NAD(+) = a 3-oxoacyl-CoA + NADH + H(+). The catalysed reaction is a (3S)-3-hydroxyacyl-CoA = a (2E)-enoyl-CoA + H2O. It catalyses the reaction a 4-saturated-(3S)-3-hydroxyacyl-CoA = a (3E)-enoyl-CoA + H2O. It carries out the reaction (3S)-3-hydroxybutanoyl-CoA = (3R)-3-hydroxybutanoyl-CoA. The enzyme catalyses a (3Z)-enoyl-CoA = a 4-saturated (2E)-enoyl-CoA. The catalysed reaction is a (3E)-enoyl-CoA = a 4-saturated (2E)-enoyl-CoA. Its pathway is lipid metabolism; fatty acid beta-oxidation. In terms of biological role, involved in the aerobic and anaerobic degradation of long-chain fatty acids via beta-oxidation cycle. Catalyzes the formation of 3-oxoacyl-CoA from enoyl-CoA via L-3-hydroxyacyl-CoA. It can also use D-3-hydroxyacyl-CoA and cis-3-enoyl-CoA as substrate. This is Fatty acid oxidation complex subunit alpha from Yersinia pseudotuberculosis serotype IB (strain PB1/+).